The sequence spans 310 residues: Transcriptional activator BRRF1 (310 aa).

The protein belongs to the lymphocryptovirus BBRF1 family.

Its function is as follows. Enhances the ability of BRLF1 to induce lytic infection by cooperating with it to transcriptionally activate the BZLF1 promoter. This Epstein-Barr virus (strain AG876) (HHV-4) protein is Transcriptional activator BRRF1.